We begin with the raw amino-acid sequence, 378 residues long: Mating-type protein MAT-1 (378 aa).

The alpha box DNA-binding region spans K60 to R117. A disordered region spans residues S235–R256. Over residues A244–Q253 the composition is skewed to basic residues.

The protein belongs to the MATALPHA1 family.

The protein resides in the nucleus. Its function is as follows. Mating type proteins are sequence specific DNA-binding proteins that act as master switches in fungal differentiation by controlling gene expression in a cell type-specific fashion. Transcriptional activator that induces the transcription of alpha-specific genes. The chain is Mating-type protein MAT-1 (MAT1) from Cochliobolus ellisii (Curvularia ellisii).